We begin with the raw amino-acid sequence, 415 residues long: 3-isopropylmalate dehydratase large subunit (415 aa).

[4Fe-4S] cluster contacts are provided by cysteine 295, cysteine 353, and cysteine 356.

Belongs to the aconitase/IPM isomerase family. LeuC type 2 subfamily. In terms of assembly, heterodimer of LeuC and LeuD. Requires [4Fe-4S] cluster as cofactor.

The enzyme catalyses (2R,3S)-3-isopropylmalate = (2S)-2-isopropylmalate. It functions in the pathway amino-acid biosynthesis; L-leucine biosynthesis; L-leucine from 3-methyl-2-oxobutanoate: step 2/4. Its function is as follows. Catalyzes the isomerization between 2-isopropylmalate and 3-isopropylmalate, via the formation of 2-isopropylmaleate. The protein is 3-isopropylmalate dehydratase large subunit of Pyrobaculum neutrophilum (strain DSM 2338 / JCM 9278 / NBRC 100436 / V24Sta) (Thermoproteus neutrophilus).